Reading from the N-terminus, the 269-residue chain is Eukaryotic translation initiation factor 3 subunit G-1 (269 aa).

One can recognise an RRM domain in the interval 188–266; sequence AAIRISNLSE…LILSVEWSKP (79 aa).

The protein belongs to the eIF-3 subunit G family. As to quaternary structure, component of the eukaryotic translation initiation factor 3 (eIF-3) complex. The eIF-3 complex interacts with pix.

Its subcellular location is the cytoplasm. In terms of biological role, RNA-binding component of the eukaryotic translation initiation factor 3 (eIF-3) complex, which is involved in protein synthesis of a specialized repertoire of mRNAs and, together with other initiation factors, stimulates binding of mRNA and methionyl-tRNAi to the 40S ribosome. The eIF-3 complex specifically targets and initiates translation of a subset of mRNAs involved in cell proliferation. This subunit can bind 18S rRNA. The chain is Eukaryotic translation initiation factor 3 subunit G-1 from Drosophila virilis (Fruit fly).